We begin with the raw amino-acid sequence, 50 residues long: Large ribosomal subunit protein eL39 (50 aa).

Residues 1–12 (MGKKSKAKKKRL) are compositionally biased toward basic residues. The tract at residues 1-21 (MGKKSKAKKKRLGKLEKQNSR) is disordered.

Belongs to the eukaryotic ribosomal protein eL39 family.

In Haloquadratum walsbyi (strain DSM 16790 / HBSQ001), this protein is Large ribosomal subunit protein eL39.